The primary structure comprises 831 residues: Zinc transporter ZIP10 (831 aa).

An N-terminal signal peptide occupies residues 1–25 (MKVHMHTKFCLICLLTFIFHHCNHC). A disordered region spans residues 126-318 (HNHQHSHNHL…RKREAPHVKN (193 aa)). Residues 138–147 (ENQTVTSVST) show a composition bias toward polar residues. An N-linked (GlcNAc...) asparagine glycan is attached at asparagine 139. Residues 152 to 171 (KCDPEKETVEVSVKSDDKHM) are compositionally biased toward basic and acidic residues. Residues 172 to 188 (HDHNHRLRHHHRLHHHL) are compositionally biased toward basic residues. Residues 189-198 (DHNNTHHFHN) are compositionally biased toward basic and acidic residues. N-linked (GlcNAc...) asparagine glycans are attached at residues asparagine 198 and asparagine 218. A compositionally biased stretch (polar residues) spans 211–221 (NEPSTETNKTQ). Over residues 229 to 238 (PKGKRKKKGR) the composition is skewed to basic residues. Composition is skewed to basic and acidic residues over residues 256–273 (DQGE…DRVH) and 281–315 (HLPE…EAPH). An N-linked (GlcNAc...) asparagine glycan is attached at asparagine 339. 2 consecutive transmembrane segments (helical) span residues 411–431 (IISI…VPII) and 438–458 (FLLT…ALLH). Positions 464 to 484 (QGGHDHSHQHAHGHGHSHGHE) are disordered. A helical transmembrane segment spans residues 495–515 (VLKGLVALGGIYLLFIIEHCI). Threonine 536 and threonine 553 each carry phosphothreonine. Phosphoserine is present on serine 591. A run of 4 helical transmembrane segments spans residues 687–707 (AIGA…IAVF), 732–752 (IVYN…GTAV), 759–779 (ITLW…LVDM), and 801–821 (FILQ…IALY).

It belongs to the ZIP transporter (TC 2.A.5) family. As to quaternary structure, interacts with SLC39A6; which triggers cells to undergo EMT and mitosis. Found in a complex with SLC39A6, SLC39A10 and with the 'Ser-727' phosphorylated form of STAT3 throughout mitosis. Found in a complex with SLC39A6, SLC39A10 and with NCAM1; this complex controls NCAM1 phosphorylation and integration into focal adhesion complexes during epithelial-tomesenchymal transition. Found in a complex with SLC39A6, SLC39A10 and with GSK3B that controls NCAM1 phosphorylation. Post-translationally, undergoes N-terminal ectodomain shedding.

It localises to the cell membrane. Its subcellular location is the apical cell membrane. The enzyme catalyses Zn(2+)(in) = Zn(2+)(out). In terms of biological role, zinc-influx transporter. When associated with SLC39A6, the heterodimer formed by SLC39A10 and SLC39A6 mediates cellular zinc uptake to trigger cells to undergo epithelial-to-mesenchymal transition (EMT). SLC39A10-SLC39A6 heterodimers play also an essentiel role in initiating mitosis by importing zinc into cells to initiate a pathway resulting in the onset of mitosis. Plays an important for both mature B-cell maintenance and humoral immune responses. When associated with SLC39A10, the heterodimer controls NCAM1 phosphorylation and integration into focal adhesion complexes during EMT. In Homo sapiens (Human), this protein is Zinc transporter ZIP10.